A 244-amino-acid chain; its full sequence is tRNA pseudouridine synthase A (244 aa).

The Nucleophile role is filled by Asp-52. Substrate is bound at residue Tyr-110.

The protein belongs to the tRNA pseudouridine synthase TruA family. In terms of assembly, homodimer.

It catalyses the reaction uridine(38/39/40) in tRNA = pseudouridine(38/39/40) in tRNA. Its function is as follows. Formation of pseudouridine at positions 38, 39 and 40 in the anticodon stem and loop of transfer RNAs. This is tRNA pseudouridine synthase A from Clostridium botulinum (strain Eklund 17B / Type B).